A 589-amino-acid chain; its full sequence is Guanylate-binding protein 2 (589 aa).

The tract at residues 1-309 (MASEIHMSEP…GAISNGSLPC (309 aa)) is GTPase domain (Globular). The GB1/RHD3-type G domain occupies 35–276 (TQPVVVVAIV…FTSYILSYSS (242 aa)). Residues 45 to 52 (GLYRTGKS), 181 to 182 (RD), and Leu245 each bind GTP. At Cys586 the chain carries Cysteine methyl ester. Cys586 carries S-geranylgeranyl cysteine lipidation. A propeptide spans 587 to 589 (TIL) (removed in mature form).

This sequence belongs to the TRAFAC class dynamin-like GTPase superfamily. GB1/RHD3 GTPase family. GB1 subfamily. As to quaternary structure, homodimer; homodimerization occurs upon GTP-binding and is required for the association with membranous structures. Heterodimer with other family members, including GBP1, GBP3, GBP4 and GBP5. Isoprenylation is required for proper subcellular location.

It is found in the cytoplasmic vesicle membrane. The protein localises to the golgi apparatus membrane. The protein resides in the cytoplasm. It localises to the perinuclear region. It carries out the reaction GTP + H2O = GDP + phosphate + H(+). In terms of biological role, interferon (IFN)-inducible GTPase that plays important roles in innate immunity against a diverse range of bacterial, viral and protozoan pathogens. Hydrolyzes GTP to GMP in 2 consecutive cleavage reactions, but the major reaction product is GDP. Following infection, recruited to the pathogen-containing vacuoles or vacuole-escaped bacteria and acts as a positive regulator of inflammasome assembly by promoting the release of inflammasome ligands from bacteria. Acts by promoting lysis of pathogen-containing vacuoles, releasing pathogens into the cytosol. Following pathogen release in the cytosol, promotes recruitment of proteins that mediate bacterial cytolysis, such as Gm12250/Irgb10: this liberates ligands that are detected by inflammasomes, such as lipopolysaccharide (LPS) that activates the non-canonical CASP4/CASP11 inflammasome or double-stranded DNA (dsDNA) that activates the AIM2 inflammasome. Confers protection to the protozoan pathogen Toxoplasma gondii. Independently of its GTPase activity, acts as an inhibitor of various viruses infectivity by inhibiting FURIN-mediated maturation of viral envelope proteins. The protein is Guanylate-binding protein 2 of Mus musculus (Mouse).